The chain runs to 331 residues: NADH-quinone oxidoreductase subunit H (331 aa).

The next 9 membrane-spanning stretches (helical) occupy residues 6 to 26 (FFIV…ATLA), 45 to 65 (GPWM…IKLF), 78 to 98 (FIFL…MSVI), 120 to 140 (IGIL…LIGG), 167 to 187 (GLSL…DIVH), 193 to 213 (ITSW…IAAF), 241 to 261 (MRWG…SIVI), 263 to 283 (LIFL…MIFL), and 311 to 331 (CWKI…FVII).

It belongs to the complex I subunit 1 family. NDH-1 is composed of 14 different subunits. Subunits NuoA, H, J, K, L, M, N constitute the membrane sector of the complex.

It localises to the cell inner membrane. The catalysed reaction is a quinone + NADH + 5 H(+)(in) = a quinol + NAD(+) + 4 H(+)(out). In terms of biological role, NDH-1 shuttles electrons from NADH, via FMN and iron-sulfur (Fe-S) centers, to quinones in the respiratory chain. The immediate electron acceptor for the enzyme in this species is believed to be ubiquinone. Couples the redox reaction to proton translocation (for every two electrons transferred, four hydrogen ions are translocated across the cytoplasmic membrane), and thus conserves the redox energy in a proton gradient. This subunit may bind ubiquinone. The polypeptide is NADH-quinone oxidoreductase subunit H (Campylobacter hominis (strain ATCC BAA-381 / DSM 21671 / CCUG 45161 / LMG 19568 / NCTC 13146 / CH001A)).